The sequence spans 228 residues: Flavin-dependent thymidylate synthase (228 aa).

The ThyX domain maps to 1 to 217 (MEYKILDKGF…PWTFEAFLKF (217 aa)). FAD-binding positions include Thr55, 78–80 (RHR), and Glu86. DUMP-binding positions include 75-78 (QWFR), 86-90 (EASLR), and Arg156. The short motif at 78-88 (RHRIGSFNEAS) is the ThyX motif element. FAD contacts are provided by residues 172-174 (NAR) and Asn178. Arg183 provides a ligand contact to dUMP. Arg183 (involved in ionization of N3 of dUMP, leading to its activation) is an active-site residue.

Belongs to the thymidylate synthase ThyX family. As to quaternary structure, homotetramer. It depends on FAD as a cofactor.

The catalysed reaction is dUMP + (6R)-5,10-methylene-5,6,7,8-tetrahydrofolate + NADPH + H(+) = dTMP + (6S)-5,6,7,8-tetrahydrofolate + NADP(+). It functions in the pathway pyrimidine metabolism; dTTP biosynthesis. Its function is as follows. Catalyzes the reductive methylation of 2'-deoxyuridine-5'-monophosphate (dUMP) to 2'-deoxythymidine-5'-monophosphate (dTMP) while utilizing 5,10-methylenetetrahydrofolate (mTHF) as the methyl donor, and NADPH and FADH(2) as the reductant. The polypeptide is Flavin-dependent thymidylate synthase (Thermosipho africanus (strain TCF52B)).